Consider the following 204-residue polypeptide: Ribosomal RNA small subunit methyltransferase G (204 aa).

Positions 73, 78, and 139 each coordinate S-adenosyl-L-methionine.

Belongs to the methyltransferase superfamily. RNA methyltransferase RsmG family.

Its subcellular location is the cytoplasm. The enzyme catalyses guanosine(527) in 16S rRNA + S-adenosyl-L-methionine = N(7)-methylguanosine(527) in 16S rRNA + S-adenosyl-L-homocysteine. In terms of biological role, specifically methylates the N7 position of guanine in position 527 of 16S rRNA. The protein is Ribosomal RNA small subunit methyltransferase G of Coxiella burnetii (strain RSA 331 / Henzerling II).